The following is a 595-amino-acid chain: ATPase family AAA domain-containing protein 3 (595 aa).

Residues 1–48 (MSWLFGVQKNATPQIPDDFQAGAAPGGPQQPGQGQRQEGNSKMAYSFD) are disordered. At 1–243 (MSWLFGVQKN…LNQFLNDKTK (243 aa)) the chain is on the mitochondrial intermembrane side. Residues 20 to 35 (QAGAAPGGPQQPGQGQ) are compositionally biased toward low complexity. Coiled-coil stretches lie at residues 80 to 107 (VTRQ…HIRV) and 140 to 175 (EELA…EHEL). Residues 244–260 (IAAAVGGLTALAVGWYT) traverse the membrane as a helical segment. Residues 261 to 595 (AKRGTGVTAR…GTTLKRETAV (335 aa)) lie on the Mitochondrial matrix side of the membrane. 349-356 (GPPGTGKT) provides a ligand contact to ATP. The PDZ-binding motif lies at 592 to 595 (ETAV).

Belongs to the AAA ATPase family.

It is found in the mitochondrion inner membrane. The protein localises to the mitochondrion matrix. Its subcellular location is the mitochondrion nucleoid. In terms of biological role, essential for mitochondrial network organization, mitochondrial metabolism and cell growth at organism and cellular level. Important during development for the up-regulation of mitochondrial activity during the transition to higher larval stages. Regulates mitochondrial iron homeostasis. May play an important role in mitochondrial protein synthesis. May also participate in mitochondrial DNA replication. May bind to mitochondrial DNA D-loops and contribute to nucleoid stability. Plays a role in regulating the production of reactive oxygen species in response to heat stress. The sequence is that of ATPase family AAA domain-containing protein 3 from Caenorhabditis elegans.